A 1088-amino-acid chain; its full sequence is Ran-binding protein 17 (1088 aa).

An N-acetylalanine modification is found at alanine 2. Serine 569 carries the phosphoserine modification.

The protein belongs to the exportin family. In terms of assembly, binds to nucleoporins and the GTP-bound form of Ran. In terms of tissue distribution, highly expressed in testis, moderately in pancreas and weakly in other tissues studied.

It is found in the cytoplasm. It localises to the nucleus. The protein localises to the nuclear pore complex. In terms of biological role, may function as a nuclear transport receptor. The sequence is that of Ran-binding protein 17 (RANBP17) from Homo sapiens (Human).